The primary structure comprises 477 residues: Glutamyl-tRNA(Gln) amidotransferase subunit A (477 aa).

Catalysis depends on charge relay system residues K76 and S151. The active-site Acyl-ester intermediate is S175.

It belongs to the amidase family. GatA subfamily. Heterotrimer of A, B and C subunits.

The catalysed reaction is L-glutamyl-tRNA(Gln) + L-glutamine + ATP + H2O = L-glutaminyl-tRNA(Gln) + L-glutamate + ADP + phosphate + H(+). Allows the formation of correctly charged Gln-tRNA(Gln) through the transamidation of misacylated Glu-tRNA(Gln) in organisms which lack glutaminyl-tRNA synthetase. The reaction takes place in the presence of glutamine and ATP through an activated gamma-phospho-Glu-tRNA(Gln). This is Glutamyl-tRNA(Gln) amidotransferase subunit A from Chlorobium phaeobacteroides (strain BS1).